The primary structure comprises 321 residues: Urease accessory protein UreD (321 aa).

It belongs to the UreD family. In terms of assembly, ureD, UreF and UreG form a complex that acts as a GTP-hydrolysis-dependent molecular chaperone, activating the urease apoprotein by helping to assemble the nickel containing metallocenter of UreC. The UreE protein probably delivers the nickel.

The protein localises to the cytoplasm. Its function is as follows. Required for maturation of urease via the functional incorporation of the urease nickel metallocenter. The protein is Urease accessory protein UreD of Photorhabdus laumondii subsp. laumondii (strain DSM 15139 / CIP 105565 / TT01) (Photorhabdus luminescens subsp. laumondii).